We begin with the raw amino-acid sequence, 319 residues long: ADP-ribosyl cyclase/cyclic ADP-ribose hydrolase 2 (319 aa).

A signal peptide spans Met1–Ala33. 3 disulfides stabilise this stretch: Cys52/Cys68, Cys84/Cys164, and Cys145/Cys158. Asn67 and Asn96 each carry an N-linked (GlcNAc...) asparagine glycan. Trp110 is an NAD(+) binding site. Nicotinamide is bound at residue Trp110. A glycan (N-linked (GlcNAc...) asparagine) is linked at Asn149. Trp173 contacts NAD(+). N-linked (GlcNAc...) asparagine glycosylation is present at Asn193. Position 211 (Glu211) interacts with NAD(+). 2 cysteine pairs are disulfide-bonded: Cys239–Cys260 and Cys272–Cys281. Ser294 carries GPI-anchor amidated serine lipidation. Residues Pro295–Ala319 constitute a propeptide that is removed on maturation.

The protein belongs to the ADP-ribosyl cyclase family. Homodimer. Pancreatic islets, kidney, spleen, heart, thymus, intestine and salivary gland.

Its subcellular location is the cell membrane. The enzyme catalyses NAD(+) + H2O = ADP-D-ribose + nicotinamide + H(+). It carries out the reaction NAD(+) = cyclic ADP-beta-D-ribose + nicotinamide + H(+). The catalysed reaction is cyclic ADP-beta-D-ribose + H2O = ADP-D-ribose. In terms of biological role, catalyzes both the synthesis of cyclic ADP-beta-D-ribose (cADPR) from NAD(+), and its hydrolysis to ADP-D-ribose (ADPR). Cyclic ADPR is known to serve as an endogenous second messenger that elicits calcium release from intracellular stores, and thus regulates the mobilization of intracellular calcium. May be involved in pre-B-cell growth. This Rattus norvegicus (Rat) protein is ADP-ribosyl cyclase/cyclic ADP-ribose hydrolase 2 (Bst1).